Reading from the N-terminus, the 92-residue chain is Small nuclear ribonucleoprotein E (92 aa).

A Sm domain is found at Ile18–Asn92.

This sequence belongs to the snRNP Sm proteins family. Core component of the spliceosomal U1, U2, U4 and U5 small nuclear ribonucleoproteins (snRNPs), the building blocks of the spliceosome. Most spliceosomal snRNPs contain a common set of Sm proteins, SNRPB, SNRPD1, SNRPD2, SNRPD3, SNRPE, SNRPF and SNRPG that assemble in a heptameric protein ring on the Sm site of the small nuclear RNA to form the core snRNP. Component of the U1 snRNP. The U1 snRNP is composed of the U1 snRNA and the 7 core Sm proteins SNRPB, SNRPD1, SNRPD2, SNRPD3, SNRPE, SNRPF and SNRPG, and at least three U1 snRNP-specific proteins SNRNP70/U1-70K, SNRPA/U1-A and SNRPC/U1-C. Component of the U4/U6-U5 tri-snRNP complex composed of the U4, U6 and U5 snRNAs and at least PRPF3, PRPF4, PRPF6, PRPF8, PRPF31, SNRNP200, TXNL4A, SNRNP40, SNRPB, SNRPD1, SNRPD2, SNRPD3, SNRPE, SNRPF, SNRPG, DDX23, CD2BP2, PPIH, SNU13, EFTUD2, SART1 and USP39, plus LSM2, LSM3, LSM4, LSM5, LSM6, LSM7 and LSM8. Component of the U7 snRNP complex, or U7 Sm protein core complex, that is composed of the U7 snRNA and at least LSM10, LSM11, SNRPB, SNRPD3, SNRPE, SNRPF and SNRPG; the complex does not contain SNRPD1 and SNRPD2. Component of the minor spliceosome, which splices U12-type introns. Part of the SMN-Sm complex that contains SMN1, GEMIN2/SIP1, DDX20/GEMIN3, GEMIN4, GEMIN5, GEMIN6, GEMIN7, GEMIN8, STRAP/UNRIP and the Sm proteins SNRPB, SNRPD1, SNRPD2, SNRPD3, SNRPE, SNRPF and SNRPG; catalyzes core snRNPs assembly. Forms a 6S pICln-Sm complex composed of CLNS1A/pICln, SNRPD1, SNRPD2, SNRPE, SNRPF and SNRPG; ring-like structure where CLNS1A/pICln mimics additional Sm proteins and which is unable to assemble into the core snRNP. Interacts with SMN1; the interaction is direct. Interacts with GEMIN2 (via N-terminus); the interaction is direct. Interacts with SNRPF; the interaction is direct. Interacts with SNRPG; the interaction is direct.

Its subcellular location is the cytoplasm. The protein resides in the cytosol. The protein localises to the nucleus. Its function is as follows. Plays a role in pre-mRNA splicing as a core component of the spliceosomal U1, U2, U4 and U5 small nuclear ribonucleoproteins (snRNPs), the building blocks of the spliceosome. Component of both the pre-catalytic spliceosome B complex and activated spliceosome C complexes. As a component of the minor spliceosome, involved in the splicing of U12-type introns in pre-mRNAs. As part of the U7 snRNP it is involved in histone 3'-end processing. The chain is Small nuclear ribonucleoprotein E (SNRPE) from Sus scrofa (Pig).